The sequence spans 289 residues: Polyketide biosynthesis malonyl CoA-acyl carrier protein transacylase BaeC (289 aa).

Catalysis depends on residues serine 87 and histidine 193.

It belongs to the FabD family.

The protein localises to the cytoplasm. The enzyme catalyses holo-[ACP] + malonyl-CoA = malonyl-[ACP] + CoA. Its pathway is antibiotic biosynthesis; bacillaene biosynthesis. Involved in some intermediate steps for the synthesis of the antibiotic polyketide bacillaene which is involved in secondary metabolism. It catalyzes the transfer of the malonyl-CoA group to the acyl-carrier-protein AcpK (Mal-AcpK). The protein is Polyketide biosynthesis malonyl CoA-acyl carrier protein transacylase BaeC (baeC) of Bacillus velezensis (strain DSM 23117 / BGSC 10A6 / LMG 26770 / FZB42) (Bacillus amyloliquefaciens subsp. plantarum).